Here is a 549-residue protein sequence, read N- to C-terminus: Chaperonin GroEL (549 aa).

ATP is bound by residues 29 to 32 (TLGP), lysine 50, 86 to 90 (DGTTT), glycine 414, 477 to 479 (NAL), and aspartate 493.

It belongs to the chaperonin (HSP60) family. Forms a cylinder of 14 subunits composed of two heptameric rings stacked back-to-back. Interacts with the co-chaperonin GroES.

It is found in the cytoplasm. The catalysed reaction is ATP + H2O + a folded polypeptide = ADP + phosphate + an unfolded polypeptide.. Functionally, together with its co-chaperonin GroES, plays an essential role in assisting protein folding. The GroEL-GroES system forms a nano-cage that allows encapsulation of the non-native substrate proteins and provides a physical environment optimized to promote and accelerate protein folding. This chain is Chaperonin GroEL, found in Leptospira biflexa serovar Patoc (strain Patoc 1 / Ames).